The primary structure comprises 364 residues: Alanine racemase (364 aa).

K39 serves as the catalytic Proton acceptor; specific for D-alanine. The residue at position 39 (K39) is an N6-(pyridoxal phosphate)lysine. A substrate-binding site is contributed by R137. Y258 serves as the catalytic Proton acceptor; specific for L-alanine. M306 is a binding site for substrate.

It belongs to the alanine racemase family. It depends on pyridoxal 5'-phosphate as a cofactor.

The catalysed reaction is L-alanine = D-alanine. Its pathway is amino-acid biosynthesis; D-alanine biosynthesis; D-alanine from L-alanine: step 1/1. In terms of biological role, catalyzes the interconversion of L-alanine and D-alanine. May also act on other amino acids. The chain is Alanine racemase (alr) from Methylobacterium sp. (strain 4-46).